The following is a 498-amino-acid chain: Probable deoxyguanosinetriphosphate triphosphohydrolase (498 aa).

The HD domain maps to 71–262 (RLTHSLEVQQ…MEAADDISYC (192 aa)).

It belongs to the dGTPase family. Type 1 subfamily. Mg(2+) is required as a cofactor.

It catalyses the reaction dGTP + H2O = 2'-deoxyguanosine + triphosphate + H(+). Functionally, dGTPase preferentially hydrolyzes dGTP over the other canonical NTPs. In Pseudomonas aeruginosa (strain ATCC 15692 / DSM 22644 / CIP 104116 / JCM 14847 / LMG 12228 / 1C / PRS 101 / PAO1), this protein is Probable deoxyguanosinetriphosphate triphosphohydrolase.